The sequence spans 345 residues: NADH-ubiquinone oxidoreductase chain 2 (345 aa).

The next 10 helical transmembrane spans lie at 3–23, 25–45, 59–79, 95–115, 148–168, 177–196, 201–223, 236–256, 273–293, and 322–342; these read PYIL…TFAS, NWLL…PLMA, YFIT…INAW, ALMT…FWLP, LMPE…GWGG, IMAY…MHFM, IINL…TLNS, FPAL…LPPL, NLAL…YFYL, and FILP…PSII.

It belongs to the complex I subunit 2 family.

The protein localises to the mitochondrion inner membrane. It catalyses the reaction a ubiquinone + NADH + 5 H(+)(in) = a ubiquinol + NAD(+) + 4 H(+)(out). Its function is as follows. Core subunit of the mitochondrial membrane respiratory chain NADH dehydrogenase (Complex I) that is believed to belong to the minimal assembly required for catalysis. Complex I functions in the transfer of electrons from NADH to the respiratory chain. The immediate electron acceptor for the enzyme is believed to be ubiquinone. In Polypterus ornatipinnis (Ornate bichir), this protein is NADH-ubiquinone oxidoreductase chain 2 (MT-ND2).